The following is a 264-amino-acid chain: MAVGKNKRLTKGGKKGAKKKVVDPFSKKDWYDVKAPAMFNIRNIGKTLVTRTQGTKIASDGLKGRVFEVSLADLQNDEVAFRKFKLITEDVQGKNCLINFHGMDLTRDKMCSMVKKWQTMIEAHIDVKTTDGYLLRLFCVGFTKKRTNQIRKTSYAQHQQVRQIRKKMVEIMTREVQTNDLKEVVNKLIPDSIGKDIEKACQSIYPLHDVYVRKVKMLKKPKFELGKLMELHGEGGGSGKPSGDETGAKVERADGYEPPVQESV.

The disordered stretch occupies residues 232–264 (HGEGGGSGKPSGDETGAKVERADGYEPPVQESV). Basic and acidic residues predominate over residues 242-255 (SGDETGAKVERADG).

It belongs to the eukaryotic ribosomal protein eS1 family. As to quaternary structure, component of the small ribosomal subunit. Mature ribosomes consist of a small (40S) and a large (60S) subunit. The 40S subunit contains about 33 different proteins and 1 molecule of RNA (18S). The 60S subunit contains about 49 different proteins and 3 molecules of RNA (28S, 5.8S and 5S). Part of the small subunit (SSU) processome, composed of more than 70 proteins and the RNA chaperone small nucleolar RNA (snoRNA) U3.

Its subcellular location is the cytoplasm. It is found in the nucleus. It localises to the nucleolus. Functionally, component of the small ribosomal subunit. The ribosome is a large ribonucleoprotein complex responsible for the synthesis of proteins in the cell. Part of the small subunit (SSU) processome, first precursor of the small eukaryotic ribosomal subunit. During the assembly of the SSU processome in the nucleolus, many ribosome biogenesis factors, an RNA chaperone and ribosomal proteins associate with the nascent pre-rRNA and work in concert to generate RNA folding, modifications, rearrangements and cleavage as well as targeted degradation of pre-ribosomal RNA by the RNA exosome. May play a role during erythropoiesis. The protein is Small ribosomal subunit protein eS1 of Ophiophagus hannah (King cobra).